The sequence spans 304 residues: Ribonuclease Z (304 aa).

Residues histidine 61, histidine 63, aspartate 65, histidine 66, histidine 138, aspartate 206, and histidine 265 each contribute to the Zn(2+) site. Aspartate 65 (proton acceptor) is an active-site residue.

The protein belongs to the RNase Z family. Homodimer. The cofactor is Zn(2+).

It catalyses the reaction Endonucleolytic cleavage of RNA, removing extra 3' nucleotides from tRNA precursor, generating 3' termini of tRNAs. A 3'-hydroxy group is left at the tRNA terminus and a 5'-phosphoryl group is left at the trailer molecule.. In terms of biological role, zinc phosphodiesterase, which displays some tRNA 3'-processing endonuclease activity. Probably involved in tRNA maturation, by removing a 3'-trailer from precursor tRNA. The protein is Ribonuclease Z of Lachnospira eligens (strain ATCC 27750 / DSM 3376 / VPI C15-48 / C15-B4) (Eubacterium eligens).